The chain runs to 473 residues: ATP synthase subunit beta (473 aa).

Position 158 to 165 (158 to 165 (GGAGVGKT)) interacts with ATP.

This sequence belongs to the ATPase alpha/beta chains family. In terms of assembly, F-type ATPases have 2 components, CF(1) - the catalytic core - and CF(0) - the membrane proton channel. CF(1) has five subunits: alpha(3), beta(3), gamma(1), delta(1), epsilon(1). CF(0) has three main subunits: a(1), b(2) and c(9-12). The alpha and beta chains form an alternating ring which encloses part of the gamma chain. CF(1) is attached to CF(0) by a central stalk formed by the gamma and epsilon chains, while a peripheral stalk is formed by the delta and b chains.

It localises to the cell membrane. The catalysed reaction is ATP + H2O + 4 H(+)(in) = ADP + phosphate + 5 H(+)(out). Functionally, produces ATP from ADP in the presence of a proton gradient across the membrane. The catalytic sites are hosted primarily by the beta subunits. The protein is ATP synthase subunit beta of Bacillus sp. (strain PS3).